Consider the following 463-residue polypeptide: Phosphoglucosamine mutase (463 aa).

Residue S101 is the Phosphoserine intermediate of the active site. Mg(2+) is bound by residues S101, D256, D258, and D260. S101 is subject to Phosphoserine.

The protein belongs to the phosphohexose mutase family. The cofactor is Mg(2+). Post-translationally, activated by phosphorylation.

It catalyses the reaction alpha-D-glucosamine 1-phosphate = D-glucosamine 6-phosphate. Catalyzes the conversion of glucosamine-6-phosphate to glucosamine-1-phosphate. This is Phosphoglucosamine mutase from Desulforapulum autotrophicum (strain ATCC 43914 / DSM 3382 / VKM B-1955 / HRM2) (Desulfobacterium autotrophicum).